Consider the following 107-residue polypeptide: UPF0145 protein YbjQ (107 aa).

It belongs to the UPF0145 family.

The chain is UPF0145 protein YbjQ from Escherichia coli (strain SMS-3-5 / SECEC).